Consider the following 238-residue polypeptide: Aspartate/glutamate leucyltransferase (238 aa).

Belongs to the R-transferase family. Bpt subfamily.

The protein resides in the cytoplasm. It catalyses the reaction N-terminal L-glutamyl-[protein] + L-leucyl-tRNA(Leu) = N-terminal L-leucyl-L-glutamyl-[protein] + tRNA(Leu) + H(+). The enzyme catalyses N-terminal L-aspartyl-[protein] + L-leucyl-tRNA(Leu) = N-terminal L-leucyl-L-aspartyl-[protein] + tRNA(Leu) + H(+). Functions in the N-end rule pathway of protein degradation where it conjugates Leu from its aminoacyl-tRNA to the N-termini of proteins containing an N-terminal aspartate or glutamate. The polypeptide is Aspartate/glutamate leucyltransferase (Shewanella oneidensis (strain ATCC 700550 / JCM 31522 / CIP 106686 / LMG 19005 / NCIMB 14063 / MR-1)).